The following is a 281-amino-acid chain: Very long chain fatty acid elongase 7 (281 aa).

Ala2 carries the post-translational modification N-acetylalanine. Residues 2-27 are Lumenal-facing; that stretch reads AFSDLTSRTVRFYDNWIKDADPRVED. Residues 28-48 form a helical membrane-spanning segment; sequence YLLMSSPLPQTIILGLYVYFV. The Cytoplasmic portion of the chain corresponds to 49-72; that stretch reads TSLGPKLMENRKPFELKKAMITYN. Residues 73 to 93 form a helical membrane-spanning segment; the sequence is FFIVLFSVYMCYEFVMSGWGT. The Lumenal portion of the chain corresponds to 94–115; it reads GYSFRCDIVDYSQSPRAMRMVH. Cys99 and Cys231 are joined by a disulfide. Residues 116–136 traverse the membrane as a helical segment; it reads TCWLYYFSKFIELLDTIFFVL. Residues Lys124, Arg137, Lys139, Gln142, and His147 each coordinate 3-oxoeicosanoyl-CoA. The Cytoplasmic segment spans residues 137–142; the sequence is RKKNSQ. The chain crosses the membrane as a helical span at residues 143-162; the sequence is VTFLHVFHHTIMPWTWWFGV. The HxxHH motif motif lies at 147–151; the sequence is HVFHH. The active-site Nucleophile is His150. The Lumenal segment spans residues 163–171; that stretch reads KFAAGGLGT. Residues 172 to 194 form a helical membrane-spanning segment; that stretch reads FHAFLNTAVHVVMYSYYGLCAMG. 3-oxoeicosanoyl-CoA-binding residues include Tyr187, Lys204, Thr208, and Gln211. Topologically, residues 195–206 are cytoplasmic; that stretch reads PAYQKYLWWKKH. A helical membrane pass occupies residues 207-227; the sequence is LTSLQLVQFVLVTIHIGQIFF. Over 228–236 the chain is Lumenal; it reads MEDCNYQYP. A helical membrane pass occupies residues 237 to 257; it reads VFLYIIMSYGCIFLLLFLHFW. Residues 258 to 281 lie on the Cytoplasmic side of the membrane; the sequence is YRAYTKGQRLPKTLENGNCKSKRH. 3-oxoeicosanoyl-CoA is bound at residue Arg266. A Di-lysine motif motif is present at residues 277–281; sequence KSKRH.

Belongs to the ELO family. ELOVL7 subfamily. In terms of assembly, homodimer. Interacts with TECR.

It localises to the endoplasmic reticulum membrane. It carries out the reaction a very-long-chain acyl-CoA + malonyl-CoA + H(+) = a very-long-chain 3-oxoacyl-CoA + CO2 + CoA. The catalysed reaction is eicosanoyl-CoA + malonyl-CoA + H(+) = 3-oxodocosanoyl-CoA + CO2 + CoA. The enzyme catalyses (5Z,8Z,11Z,14Z)-eicosatetraenoyl-CoA + malonyl-CoA + H(+) = (7Z,10Z,13Z,16Z)-3-oxodocosatetraenoyl-CoA + CO2 + CoA. It catalyses the reaction (6Z,9Z,12Z)-octadecatrienoyl-CoA + malonyl-CoA + H(+) = (8Z,11Z,14Z)-3-oxoeicosatrienoyl-CoA + CO2 + CoA. It carries out the reaction (9Z,12Z)-octadecadienoyl-CoA + malonyl-CoA + H(+) = (11Z,14Z)-3-oxoicosa-11,14-dienoyl-CoA + CO2 + CoA. The catalysed reaction is (9Z)-octadecenoyl-CoA + malonyl-CoA + H(+) = 3-oxo-(11Z)-eicosenoyl-CoA + CO2 + CoA. The enzyme catalyses octadecanoyl-CoA + malonyl-CoA + H(+) = 3-oxoeicosanoyl-CoA + CO2 + CoA. It catalyses the reaction hexadecanoyl-CoA + malonyl-CoA + H(+) = 3-oxooctadecanoyl-CoA + CO2 + CoA. It carries out the reaction (9Z,12Z,15Z)-octadecatrienoyl-CoA + malonyl-CoA + H(+) = (11Z,14Z,17Z)-3-oxoeicosatrienoyl-CoA + CO2 + CoA. It functions in the pathway lipid metabolism; fatty acid biosynthesis. In terms of biological role, catalyzes the first and rate-limiting reaction of the four reactions that constitute the long-chain fatty acids elongation cycle. This endoplasmic reticulum-bound enzymatic process allows the addition of 2 carbons to the chain of long- and very long-chain fatty acids (VLCFAs) per cycle. Condensing enzyme with higher activity toward C18 acyl-CoAs, especially C18:3(n-3) acyl-CoAs and C18:3(n-6)-CoAs. Also active toward C20:4-, C18:0-, C18:1-, C18:2- and C16:0-CoAs, and weakly toward C20:0-CoA. Little or no activity toward C22:0-, C24:0-, or C26:0-CoAs. May participate in the production of saturated and polyunsaturated VLCFAs of different chain lengths that are involved in multiple biological processes as precursors of membrane lipids and lipid mediators. The sequence is that of Very long chain fatty acid elongase 7 from Mus musculus (Mouse).